The sequence spans 177 residues: Large ribosomal subunit protein uL6 (177 aa).

Belongs to the universal ribosomal protein uL6 family. Part of the 50S ribosomal subunit.

In terms of biological role, this protein binds to the 23S rRNA, and is important in its secondary structure. It is located near the subunit interface in the base of the L7/L12 stalk, and near the tRNA binding site of the peptidyltransferase center. The sequence is that of Large ribosomal subunit protein uL6 from Aromatoleum aromaticum (strain DSM 19018 / LMG 30748 / EbN1) (Azoarcus sp. (strain EbN1)).